Reading from the N-terminus, the 258-residue chain is Pimeloyl-[acyl-carrier protein] methyl ester esterase (258 aa).

The region spanning 16 to 241 (LVLLHGWGLN…GSAHAPFVSH (226 aa)) is the AB hydrolase-1 domain. Substrate is bound by residues tryptophan 22, 82–83 (SM), and 143–147 (FLALQ). Serine 82 (nucleophile) is an active-site residue. Active-site residues include aspartate 207 and histidine 235. Substrate is bound at residue histidine 235.

It belongs to the AB hydrolase superfamily. Carboxylesterase BioH family. Monomer.

It is found in the cytoplasm. It catalyses the reaction 6-carboxyhexanoyl-[ACP] methyl ester + H2O = 6-carboxyhexanoyl-[ACP] + methanol + H(+). It participates in cofactor biosynthesis; biotin biosynthesis. The physiological role of BioH is to remove the methyl group introduced by BioC when the pimeloyl moiety is complete. It allows to synthesize pimeloyl-ACP via the fatty acid synthetic pathway through the hydrolysis of the ester bonds of pimeloyl-ACP esters. This Yersinia enterocolitica serotype O:8 / biotype 1B (strain NCTC 13174 / 8081) protein is Pimeloyl-[acyl-carrier protein] methyl ester esterase.